A 194-amino-acid polypeptide reads, in one-letter code: MAEVAQNSPAEVQAKQVVYCGVCTLPPEYCEFGGTAKKCEEWLKDNHADLYQRLYSEEALSSNLSELSVSVRERAAKDAAKKEAKAAAAEARDAERKAAAKVQIKRVERNKRKHVTVITGLEVHGLENKKVAKELGKKFATGSSVTKSPAGVEEITVQGDVSEDVQEWLLELYGKEIPESNIELVEDKKKKASG.

In terms of domain architecture, SUI1 spans 102–173 (VQIKRVERNK…DVQEWLLELY (72 aa)).

It belongs to the DENR family. In terms of assembly, interacts with the 40S ribosomal subunit.

The protein resides in the cytoplasm. The polypeptide is Translation machinery-associated protein 22 (tma22) (Neosartorya fischeri (strain ATCC 1020 / DSM 3700 / CBS 544.65 / FGSC A1164 / JCM 1740 / NRRL 181 / WB 181) (Aspergillus fischerianus)).